The sequence spans 561 residues: Dihydroxy-acid dehydratase (561 aa).

Cys51 contacts [2Fe-2S] cluster. Mg(2+) is bound at residue Asp83. Cys124 serves as a coordination point for [2Fe-2S] cluster. Mg(2+)-binding residues include Asp125 and Lys126. Residue Lys126 is modified to N6-carboxylysine. Cys196 contacts [2Fe-2S] cluster. Glu448 provides a ligand contact to Mg(2+). The Proton acceptor role is filled by Ser473.

It belongs to the IlvD/Edd family. As to quaternary structure, homodimer. [2Fe-2S] cluster serves as cofactor. The cofactor is Mg(2+).

The enzyme catalyses (2R)-2,3-dihydroxy-3-methylbutanoate = 3-methyl-2-oxobutanoate + H2O. It carries out the reaction (2R,3R)-2,3-dihydroxy-3-methylpentanoate = (S)-3-methyl-2-oxopentanoate + H2O. It participates in amino-acid biosynthesis; L-isoleucine biosynthesis; L-isoleucine from 2-oxobutanoate: step 3/4. The protein operates within amino-acid biosynthesis; L-valine biosynthesis; L-valine from pyruvate: step 3/4. In terms of biological role, functions in the biosynthesis of branched-chain amino acids. Catalyzes the dehydration of (2R,3R)-2,3-dihydroxy-3-methylpentanoate (2,3-dihydroxy-3-methylvalerate) into 2-oxo-3-methylpentanoate (2-oxo-3-methylvalerate) and of (2R)-2,3-dihydroxy-3-methylbutanoate (2,3-dihydroxyisovalerate) into 2-oxo-3-methylbutanoate (2-oxoisovalerate), the penultimate precursor to L-isoleucine and L-valine, respectively. The protein is Dihydroxy-acid dehydratase of Sulfolobus acidocaldarius (strain ATCC 33909 / DSM 639 / JCM 8929 / NBRC 15157 / NCIMB 11770).